Consider the following 387-residue polypeptide: GTPase Obg (387 aa).

The Obg domain maps to 1 to 159 (MKFLDEAKIY…MWVRLEMKLL (159 aa)). In terms of domain architecture, OBG-type G spans 160-334 (ADVGLVGMPN…LVYHVGGMVK (175 aa)). GTP-binding positions include 166 to 173 (GMPNAGKS), 191 to 195 (FTTLQ), 213 to 216 (DIPG), 283 to 286 (SKAD), and 315 to 317 (SSA). Mg(2+) contacts are provided by Ser173 and Thr193. The interval 347–379 (LEDAPTRAGSKALRDEHAPSWQDDDDDDDDDDG) is disordered. Positions 368 to 379 (QDDDDDDDDDDG) are enriched in acidic residues.

Belongs to the TRAFAC class OBG-HflX-like GTPase superfamily. OBG GTPase family. As to quaternary structure, monomer. Mg(2+) serves as cofactor.

The protein resides in the cytoplasm. Functionally, an essential GTPase which binds GTP, GDP and possibly (p)ppGpp with moderate affinity, with high nucleotide exchange rates and a fairly low GTP hydrolysis rate. Plays a role in control of the cell cycle, stress response, ribosome biogenesis and in those bacteria that undergo differentiation, in morphogenesis control. This chain is GTPase Obg, found in Magnetococcus marinus (strain ATCC BAA-1437 / JCM 17883 / MC-1).